Here is a 78-residue protein sequence, read N- to C-terminus: Toxin-like protein 10 (78 aa).

Residues 1 to 23 (MKATALLIAVFILFSVFGDMGYC) form the signal peptide.

In terms of processing, contains 4 disulfide bonds. As to expression, expressed by the venom gland.

Its subcellular location is the secreted. The sequence is that of Toxin-like protein 10 from Urodacus yaschenkoi (Inland robust scorpion).